Consider the following 510-residue polypeptide: Glutamate decarboxylase (510 aa).

Residue Gln107–Ser109 participates in substrate binding. The residue at position 322 (Lys322) is an N6-(pyridoxal phosphate)lysine. Residue Arg483 participates in substrate binding.

The protein belongs to the group II decarboxylase family. Homodimer. Pyridoxal 5'-phosphate serves as cofactor. As to expression, expressed in the head (at protein level).

The enzyme catalyses L-glutamate + H(+) = 4-aminobutanoate + CO2. Functionally, catalyzes the production of GABA. The chain is Glutamate decarboxylase (Gad1) from Drosophila melanogaster (Fruit fly).